The following is a 290-amino-acid chain: Enoyl-CoA hydratase, mitochondrial (290 aa).

Residues 1–27 (MAALRALLPRACSSLLSSVRCPELRRF) constitute a mitochondrion transit peptide. A substrate-binding site is contributed by 98-101 (ADIK). Position 101 is an N6-acetyllysine; alternate (K101). An N6-succinyllysine; alternate modification is found at K101. S114 is modified (phosphoserine). N6-acetyllysine; alternate is present on K115. K115 bears the N6-succinyllysine; alternate mark. G141 contributes to the substrate binding site. Position 204 is an N6-succinyllysine (K204). At K211 the chain carries N6-acetyllysine. K217 bears the N6-acetyllysine; alternate mark. K217 carries the post-translational modification N6-succinyllysine; alternate.

The protein belongs to the enoyl-CoA hydratase/isomerase family. Homohexamer; dimer of trimers. Acetylation of Lys-101 is observed in liver mitochondria from fasted mice but not from fed mice.

Its subcellular location is the mitochondrion matrix. The enzyme catalyses a (3S)-3-hydroxyacyl-CoA = a (2E)-enoyl-CoA + H2O. It carries out the reaction a (3E)-enoyl-CoA = a 4-saturated (2E)-enoyl-CoA. The catalysed reaction is (3E)-hexenoyl-CoA = (2E)-hexenoyl-CoA. It catalyses the reaction (3S)-3-hydroxybutanoyl-CoA = (2E)-butenoyl-CoA + H2O. The enzyme catalyses 3-hydroxyisovaleryl-CoA = 3-methylbut-2-enoyl-CoA + H2O. It carries out the reaction 3-hydroxypropanoyl-CoA = acryloyl-CoA + H2O. The catalysed reaction is 3-hydroxybutanoyl-CoA = (2E)-butenoyl-CoA + H2O. It catalyses the reaction 2-methylpropenoyl-CoA + H2O = (S)-3-hydroxyisobutanoyl-CoA. The enzyme catalyses (3S)-hydroxyhexanoyl-CoA = (2E)-hexenoyl-CoA + H2O. It carries out the reaction (3S)-hydroxydecanoyl-CoA = (2E)-decenoyl-CoA + H2O. Its pathway is lipid metabolism; fatty acid beta-oxidation. Its function is as follows. Converts unsaturated trans-2-enoyl-CoA species ((2E)-enoyl-CoA) to the corresponding (3S)-3-hydroxyacyl-CoA species through addition of a water molecule to the double bond. Catalyzes the hydration of medium- and short-chained fatty enoyl-CoA thioesters from 4 carbons long (C4) up to C16. Has high substrate specificity for crotonyl-CoA ((2E)-butenoyl-CoA) and moderate specificity for acryloyl-CoA, 3-methylcrotonyl-CoA (3-methyl-(2E)-butenoyl-CoA) and methacrylyl-CoA ((2E)-2-methylpropenoyl-CoA). Can bind tiglyl-CoA (2-methylcrotonoyl-CoA), but hydrates only a small amount of this substrate. Plays a key role in the beta-oxidation spiral of short- and medium-chain fatty acid oxidation. At a lower rate than the hydratase reaction, catalyzes the isomerase reaction of trans-3-enoyl-CoA species (such as (3E)-hexenoyl-CoA) to trans-2-enoyl-CoA species (such as (2E)-hexenoyl-CoA), which are subsequently hydrated to 3(S)-3-hydroxyacyl-CoA species (such as (3S)-hydroxyhexanoyl-CoA). The chain is Enoyl-CoA hydratase, mitochondrial from Mus musculus (Mouse).